The following is a 297-amino-acid chain: Glycerol-3-phosphate dehydrogenase [NAD(P)+] (297 aa).

3 residues coordinate NADPH: Trp11, Arg33, and Lys79. Sn-glycerol 3-phosphate is bound by residues Lys79, Gly107, and Ser109. Ala111 lines the NADPH pocket. Sn-glycerol 3-phosphate-binding residues include Lys161, Asp214, Ser224, Arg225, and Asn226. Lys161 serves as the catalytic Proton acceptor. Residue Arg225 participates in NADPH binding. NADPH is bound by residues Val249 and Glu251.

The protein belongs to the NAD-dependent glycerol-3-phosphate dehydrogenase family.

Its subcellular location is the cytoplasm. It catalyses the reaction sn-glycerol 3-phosphate + NAD(+) = dihydroxyacetone phosphate + NADH + H(+). The enzyme catalyses sn-glycerol 3-phosphate + NADP(+) = dihydroxyacetone phosphate + NADPH + H(+). It functions in the pathway membrane lipid metabolism; glycerophospholipid metabolism. Its function is as follows. Catalyzes the reduction of the glycolytic intermediate dihydroxyacetone phosphate (DHAP) to sn-glycerol 3-phosphate (G3P), the key precursor for phospholipid synthesis. The chain is Glycerol-3-phosphate dehydrogenase [NAD(P)+] from Campylobacter jejuni subsp. jejuni serotype O:23/36 (strain 81-176).